We begin with the raw amino-acid sequence, 922 residues long: Histidine kinase 5 (922 aa).

Coiled coils occupy residues 86–120 (MQDN…EEYK) and 169–205 (KQKA…SQSA). The Histidine kinase domain occupies 373–614 (TMSHEIRSPL…TFTFILPYKV (242 aa)). Residue H376 is modified to Phosphohistidine; by autocatalysis. Disordered regions lie at residues 620-639 (YSDD…EPDD) and 728-773 (NGRC…TEVK). Over residues 738–747 (SCSSSQASSE) the composition is skewed to low complexity. A compositionally biased stretch (basic and acidic residues) spans 761 to 773 (SHREEEKAETEVK). The Response regulatory domain maps to 779–921 (KILLVEDNKI…KLRECLQQYL (143 aa)). Positions 785, 828, and 830 each coordinate Mg(2+). At D828 the chain carries 4-aspartylphosphate.

As to quaternary structure, interacts with AHP1, APH2, APH3, APH5 and APH6, but not with APH4. In terms of tissue distribution, present in light-grown but not in etiolated seedlings. Mostly expressed in roots flowers and siliques, and, to a lower extent, in stems and leaves, especially in guard cells.

The protein localises to the cell membrane. The protein resides in the cytoplasm. The enzyme catalyses ATP + protein L-histidine = ADP + protein N-phospho-L-histidine.. Functionally, functions as a histidine kinase and transmits the stress signal to a downstream MAPK cascade. This protein undergoes an ATP-dependent autophosphorylation at a conserved histidine residue in the kinase core, and a phosphoryl group is then transferred to a conserved aspartate residue in the receiver domain. Negative regulator of the ETR1-dependent abscisic acid (ABA) and ethylene signaling pathway that inhibits the root elongation. Promotes stomatal closure. Regulates stomatal opening by integrating multiple signals via hydrogen peroxide H(2)O(2) homeostasis in guard cells in an ABA-independent manner. May contribute to basal defense mechanisms by closing stomata in the presence of bacterial pathogens. Regulates both hormone levels and ROS production in response to stress. Required for full immunity to bacterial pathogen and necrotrophic fungus. In Arabidopsis thaliana (Mouse-ear cress), this protein is Histidine kinase 5 (AHK5).